We begin with the raw amino-acid sequence, 92 residues long: Probable Fe(2+)-trafficking protein (92 aa).

This sequence belongs to the Fe(2+)-trafficking protein family.

Functionally, could be a mediator in iron transactions between iron acquisition and iron-requiring processes, such as synthesis and/or repair of Fe-S clusters in biosynthetic enzymes. The chain is Probable Fe(2+)-trafficking protein from Shewanella piezotolerans (strain WP3 / JCM 13877).